The sequence spans 445 residues: Glutamate-1-semialdehyde 2,1-aminomutase (445 aa).

Residue Lys263 is modified to N6-(pyridoxal phosphate)lysine.

Belongs to the class-III pyridoxal-phosphate-dependent aminotransferase family. HemL subfamily. Requires pyridoxal 5'-phosphate as cofactor.

Its subcellular location is the cytoplasm. It catalyses the reaction (S)-4-amino-5-oxopentanoate = 5-aminolevulinate. Its pathway is porphyrin-containing compound metabolism; protoporphyrin-IX biosynthesis; 5-aminolevulinate from L-glutamyl-tRNA(Glu): step 2/2. The chain is Glutamate-1-semialdehyde 2,1-aminomutase from Halorubrum lacusprofundi (strain ATCC 49239 / DSM 5036 / JCM 8891 / ACAM 34).